Consider the following 207-residue polypeptide: MANYDVLKVDGSKSGSVELSDSVFAIEPNNSVLFEAINLQRASLRQGTHAVKNRSAVRGGGRKPWRQKGTGRARQGTIRAPQWRGGGIVFGPTPRSYAYKMPKKMRRLALRSALSFKVKENNFTIVDNFGFEAPKTKEFKNVLTTLEQPKKVLVVTDSEDVNVELSARNIPGVQVSTAQGLNVLDITSADSVIITESAAKKVEEVLG.

The tract at residues 54 to 76 (RSAVRGGGRKPWRQKGTGRARQG) is disordered. The segment covering 60–71 (GGRKPWRQKGTG) has biased composition (basic residues).

This sequence belongs to the universal ribosomal protein uL4 family. Part of the 50S ribosomal subunit.

Its function is as follows. One of the primary rRNA binding proteins, this protein initially binds near the 5'-end of the 23S rRNA. It is important during the early stages of 50S assembly. It makes multiple contacts with different domains of the 23S rRNA in the assembled 50S subunit and ribosome. Functionally, forms part of the polypeptide exit tunnel. This is Large ribosomal subunit protein uL4 from Staphylococcus haemolyticus (strain JCSC1435).